The sequence spans 421 residues: UDP-N-acetylglucosamine 1-carboxyvinyltransferase (421 aa).

22 to 23 (KN) contributes to the phosphoenolpyruvate binding site. R92 is a binding site for UDP-N-acetyl-alpha-D-glucosamine. Catalysis depends on D116, which acts as the Proton donor. Residues 121–125 (RPIDQ), D307, and I330 contribute to the UDP-N-acetyl-alpha-D-glucosamine site.

Belongs to the EPSP synthase family. MurA subfamily.

The protein localises to the cytoplasm. The catalysed reaction is phosphoenolpyruvate + UDP-N-acetyl-alpha-D-glucosamine = UDP-N-acetyl-3-O-(1-carboxyvinyl)-alpha-D-glucosamine + phosphate. The protein operates within cell wall biogenesis; peptidoglycan biosynthesis. Cell wall formation. Adds enolpyruvyl to UDP-N-acetylglucosamine. This Lactobacillus johnsonii (strain CNCM I-12250 / La1 / NCC 533) protein is UDP-N-acetylglucosamine 1-carboxyvinyltransferase.